The following is a 351-amino-acid chain: uncharacterized protein (351 aa).

It belongs to the glycosyltransferase group 1 family. Glycosyltransferase 4 subfamily.

This is an uncharacterized protein from Methanocaldococcus jannaschii (strain ATCC 43067 / DSM 2661 / JAL-1 / JCM 10045 / NBRC 100440) (Methanococcus jannaschii).